The chain runs to 168 residues: Zinc-finger homeodomain protein 14 (168 aa).

The segment at 7-51 (YRECMRNHAAKLGSYAIDGCREYSQPSTGDLCVACGCHRSYHRRI) adopts a ZF-HD dimerization-type; degenerate zinc-finger fold. Residues 76 to 103 (ARLKWKTAEERNEEEEDDTEETSTEEKM) adopt a coiled-coil conformation. The interval 82-112 (TAEERNEEEEDDTEETSTEEKMTVQRRRKSK) is disordered. A compositionally biased stretch (acidic residues) spans 86–98 (RNEEEEDDTEETS). The homeobox DNA-binding region spans 106–168 (QRRRKSKFTA…WVNNNKKFYH (63 aa)).

Homo- and heterodimer with other ZFHD proteins. Interacts with ZHD11. In terms of tissue distribution, mostly expressed in flowers and stems.

It localises to the nucleus. Putative transcription factor. This is Zinc-finger homeodomain protein 14 (ZHD14) from Arabidopsis thaliana (Mouse-ear cress).